Consider the following 801-residue polypeptide: Cation/H(+) antiporter 28 (801 aa).

Helical transmembrane passes span 24–44 (ALKI…HYLM), 77–97 (SITL…VMGL), 113–133 (FIAY…TPFL), 140–160 (PYIF…PILT), 179–199 (AAGV…FIFF), 216–236 (LLMF…SPIF), 252–272 (GSHL…PTWP), 275–292 (SMYN…FLPN), 304–324 (INYL…GFII), 343–363 (LLGT…LLLG), 371–391 (SLGL…ALAI), and 403–423 (LIIF…MDII).

This sequence belongs to the monovalent cation:proton antiporter 2 (CPA2) transporter (TC 2.A.37) family. CHX (TC 2.A.37.4) subfamily. As to expression, specifically expressed in pollen.

It is found in the membrane. Its function is as follows. May operate as a cation/H(+) antiporter. The polypeptide is Cation/H(+) antiporter 28 (CHX28) (Arabidopsis thaliana (Mouse-ear cress)).